Consider the following 595-residue polypeptide: MAPWSGLWGGKLAAGESPVLRSRFYAFIRAFVVLSVLLLIVELGAYINGWDDLAASALALPVIGVESLYASWLRFRATYVAPFIQFLTDACVVLFLIQSADRLIQCLGCFYIHLKRIKPNPKSPALPDAEDPDAAYYPMVLVQIPMCNEKEVYQQSIAAVCNLDWPRSNFLVQVLDDSDDPTTQTLIREEVLKWQQNGARIVYRHRVLRDGYKAGNLKSAMSCSYVKDYEFVAIFDADFQPNPDFLKRTVPHFKDNDELGLVQARWSFVNKDENLLTRLQNINLCFHFEVEQQVNGIFLNFFGFNGTAGVWRIKALDDSGGWMERTTVEDMDIAVRAHLRGWKFIFLNDVECQCELPESYEAYRKQQHRWHSGPMQLFRLCLPDIIKCKIVFWKKANLIFLFFLLRKLILPFYSFTLFCIILPMTMFVPEAELPDWVVCYIPALMSLLNILPSPKSFPFIIPYLLFENTMSVTKFNAMISGLFQLGNAYEWVVTKKSGRSSEGDLISLAPKELKHQKTESAPNLDAIAKEQSAPRKDVKKKHNRIYKKELALSLLLLTAAARSLLSKQGIHFYFLLFQGISFLLVGLDLIGEQIE.

Helical transmembrane passes span 30-50 (AFVV…INGW) and 77-97 (ATYV…LFLI). Asp-177 is a catalytic residue. 2 residues coordinate substrate: Asp-236 and Asp-238. Residue Asp-330 is part of the active site. A run of 4 helical transmembrane segments spans residues 408–428 (LILP…TMFV), 433–453 (LPDW…ILPS), 545–564 (IYKK…ARSL), and 570–590 (IHFY…LDLI).

This sequence belongs to the glycosyltransferase 2 family. Plant cellulose synthase-like C subfamily.

The protein resides in the golgi apparatus membrane. Functionally, probable beta-1,4-glucan synthase rather involved in the synthesis of the xyloglucan backbone than cellulose. Seems to work simultaneously with xyloglucan 6-xylosyltransferase. Xyloglucan is a noncellulosic polysaccharides of plant cell wall and consists of a glucan backbone substituted by xylose, galactose and fucose. This is Probable xyloglucan glycosyltransferase 9 (CSLC9) from Oryza sativa subsp. japonica (Rice).